Consider the following 642-residue polypeptide: Arginine--tRNA ligase (642 aa).

Positions 133–143 (VNPTKPLHMGH) match the 'HIGH' region motif.

This sequence belongs to the class-I aminoacyl-tRNA synthetase family.

Its subcellular location is the cytoplasm. The enzyme catalyses tRNA(Arg) + L-arginine + ATP = L-arginyl-tRNA(Arg) + AMP + diphosphate. The sequence is that of Arginine--tRNA ligase from Thermococcus kodakarensis (strain ATCC BAA-918 / JCM 12380 / KOD1) (Pyrococcus kodakaraensis (strain KOD1)).